A 151-amino-acid chain; its full sequence is Transmembrane protein 239 (151 aa).

3 consecutive transmembrane segments (helical) span residues 61–81 (LWGLEGTLYLLLALMLCHALF), 85–105 (SYLLSSLWPVVAVMWSHLLPA), and 116–138 (ALLFAASFLLLFSTLLSLVGLLT).

The protein localises to the membrane. The sequence is that of Transmembrane protein 239 (Tmem239) from Mus musculus (Mouse).